Here is a 343-residue protein sequence, read N- to C-terminus: Fanconi anemia group F protein (343 aa).

Belongs to the multisubunit FA complex composed of FANCA, FANCB, FANCC, FANCE, FANCF, FANCG, FANCL/PHF9 and FANCM. In complex with FANCA, FANCG and FANCL, but not with FANCC, nor FANCE, interacts with HES1; this interaction may be essential for the stability and nuclear localization of FA core complex proteins.

Its subcellular location is the nucleus. Its function is as follows. DNA repair protein that may operate in a postreplication repair or a cell cycle checkpoint function. May be implicated in interstrand DNA cross-link repair and in the maintenance of normal chromosome stability. This is Fanconi anemia group F protein from Mus musculus (Mouse).